The chain runs to 191 residues: Apoptosis regulator BHRF1 (191 aa).

Residues 1–18 (MAYSTREILLALCIRDSR) form an interaction with host VRK2 region. An N-linked (GlcNAc...) asparagine; by host glycan is attached at Asn-22. The BH1 signature appears at 89–109 (EIFHRGDPSLGRALAWMAWCM). The interaction with host VRK2 stretch occupies residues 89–142 (EIFHRGDPSLGRALAWMAWCMHACRTLCCNQSTPYYVVDLSVRGMLEASEGLDG). The N-linked (GlcNAc...) asparagine; by host glycan is linked to Asn-118. Positions 142–157 (GWIHQQGGWSTLIEDN) match the BH2 motif. Residues 166–186 (WTLFLAGLTLSLLVICSYLFI) traverse the membrane as a helical segment.

This sequence belongs to the Bcl-2 family. In terms of assembly, interacts with isoform 1 of host VRK2; this interaction is involved in protecting cells from apoptosis. Interacts with host PRA1; this interaction seems to modulate BHRF1 anti-apoptotic activity. Interacts with host BCL2L11. Interacts with host BAD and BBC3. Interacts with BALF1; BALF1 acting as a negative regulator of the survival function of BHRF1. Interacts with host BECN1.

Its subcellular location is the host membrane. The protein localises to the host mitochondrion. Prevents premature death of the host cell during virus production, which would otherwise reduce the amount of progeny virus. Acts as a host B-cell leukemia/lymphoma 2 (Bcl-2) homolog, and interacts with pro-apoptotic proteins to prevent mitochondria permeabilization, release of cytochrome c and subsequent apoptosis of the host cell. In addition, plays a role in the inhibiton of host BECN1-mediated starvation-induced autophagy without affecting basal levels of autophagy. The chain is Apoptosis regulator BHRF1 from Homo sapiens (Human).